Here is a 90-residue protein sequence, read N- to C-terminus: UPF0297 protein Cthe_0151 (90 aa).

It belongs to the UPF0297 family.

The chain is UPF0297 protein Cthe_0151 from Acetivibrio thermocellus (strain ATCC 27405 / DSM 1237 / JCM 9322 / NBRC 103400 / NCIMB 10682 / NRRL B-4536 / VPI 7372) (Clostridium thermocellum).